We begin with the raw amino-acid sequence, 389 residues long: Lipid-A-disaccharide synthase (389 aa).

The protein belongs to the LpxB family.

The catalysed reaction is a lipid X + a UDP-2-N,3-O-bis[(3R)-3-hydroxyacyl]-alpha-D-glucosamine = a lipid A disaccharide + UDP + H(+). It functions in the pathway bacterial outer membrane biogenesis; LPS lipid A biosynthesis. Functionally, condensation of UDP-2,3-diacylglucosamine and 2,3-diacylglucosamine-1-phosphate to form lipid A disaccharide, a precursor of lipid A, a phosphorylated glycolipid that anchors the lipopolysaccharide to the outer membrane of the cell. The polypeptide is Lipid-A-disaccharide synthase (Burkholderia lata (strain ATCC 17760 / DSM 23089 / LMG 22485 / NCIMB 9086 / R18194 / 383)).